We begin with the raw amino-acid sequence, 713 residues long: Ribosomal RNA large subunit methyltransferase K/L (713 aa).

The 112-residue stretch at 46 to 157 (TAYRICLWSR…RDQATLSLDL (112 aa)) folds into the THUMP domain.

Belongs to the methyltransferase superfamily. RlmKL family.

Its subcellular location is the cytoplasm. The enzyme catalyses guanosine(2445) in 23S rRNA + S-adenosyl-L-methionine = N(2)-methylguanosine(2445) in 23S rRNA + S-adenosyl-L-homocysteine + H(+). It carries out the reaction guanosine(2069) in 23S rRNA + S-adenosyl-L-methionine = N(2)-methylguanosine(2069) in 23S rRNA + S-adenosyl-L-homocysteine + H(+). Its function is as follows. Specifically methylates the guanine in position 2445 (m2G2445) and the guanine in position 2069 (m7G2069) of 23S rRNA. The polypeptide is Ribosomal RNA large subunit methyltransferase K/L (Syntrophotalea carbinolica (strain DSM 2380 / NBRC 103641 / GraBd1) (Pelobacter carbinolicus)).